The chain runs to 264 residues: Apolipoprotein A-I (264 aa).

A signal peptide spans 1 to 18; the sequence is MRGVLVTLAVLFLTGTQA. 2 consecutive repeat copies span residues 67-88 and 89-110. Positions 67-264 are 10 X approximate tandem repeats; sequence LKLADNLDTL…FLDELQKSVA (198 aa). Residues 111-121 form a 3; half-length repeat; sequence KDLEEVKEKIR. Repeat copies occupy residues 122–143, 144–165, 166–187, 188–209, and 210–231. A 9; half-length repeat occupies 232-242; the sequence is PLVQEFRERLT. Copy 10 of the repeat occupies 243–264; it reads PYAENLKNRLISFLDELQKSVA.

This sequence belongs to the apolipoprotein A1/A4/E family. In terms of assembly, homodimer. As to expression, major protein of plasma HDL, also found in chylomicrons.

It is found in the secreted. Participates in the reverse transport of cholesterol from tissues to the liver for excretion by promoting cholesterol efflux from tissues and by acting as a cofactor for the lecithin cholesterol acyltransferase (LCAT). The sequence is that of Apolipoprotein A-I (APOA1) from Gallus gallus (Chicken).